The sequence spans 372 residues: MAKSKTKHRLCSQESSVSALLASCTLSGSNSSNSDGSFHYKDKLYRSASQALQAYIDDFDLGQIYPGASTGKINIDEDFTNMSQFCNYIYKPNNAFENLDHKKHSNFISCRRHTVNDIDSMSLTTDDLLRLPADGSFSYTYVGPSHRTSKKNKKCRGRLGSLDIEKNPHFQGPYTSMGKDNFVTPVIRSNINGKQCGDKIELLILKAKRNLEQCTEELPKSMKKDDSPCSLDKLEADRSWENIPVTFKSPVPVNSDDSPQQTSRAKSAKGVLEDFLNNDNQSCTLSGGKHHGPVEALKQMLFNLQAVQERFNQNKTTDPKEEIKQVSEDDFSKLQLKESMIPITRSLQKALHHLSRLRDLVDDTNGERSPKM.

A signal peptide spans 1–31 (MAKSKTKHRLCSQESSVSALLASCTLSGSNS). Ser-161 is subject to Phosphoserine. The interval 248–268 (KSPVPVNSDDSPQQTSRAKSA) is disordered. Residues 255–265 (SDDSPQQTSRA) show a composition bias toward polar residues.

The protein localises to the secreted. Its function is as follows. Might play a role in cell proliferation. This Homo sapiens (Human) protein is Lung adenoma susceptibility protein 2 (LAS2).